The chain runs to 159 residues: Ribosomal RNA large subunit methyltransferase H (159 aa).

S-adenosyl-L-methionine is bound by residues Leu76, Gly108, and 127-132 (FSKMTF).

It belongs to the RNA methyltransferase RlmH family. In terms of assembly, homodimer.

It is found in the cytoplasm. It catalyses the reaction pseudouridine(1915) in 23S rRNA + S-adenosyl-L-methionine = N(3)-methylpseudouridine(1915) in 23S rRNA + S-adenosyl-L-homocysteine + H(+). Specifically methylates the pseudouridine at position 1915 (m3Psi1915) in 23S rRNA. The polypeptide is Ribosomal RNA large subunit methyltransferase H (Bifidobacterium longum subsp. infantis (strain ATCC 15697 / DSM 20088 / JCM 1222 / NCTC 11817 / S12)).